The following is a 345-amino-acid chain: N-acetyl-gamma-glutamyl-phosphate reductase (345 aa).

The active site involves cysteine 142.

This sequence belongs to the NAGSA dehydrogenase family. Type 1 subfamily.

It is found in the cytoplasm. It catalyses the reaction N-acetyl-L-glutamate 5-semialdehyde + phosphate + NADP(+) = N-acetyl-L-glutamyl 5-phosphate + NADPH + H(+). It participates in amino-acid biosynthesis; L-arginine biosynthesis; N(2)-acetyl-L-ornithine from L-glutamate: step 3/4. In terms of biological role, catalyzes the NADPH-dependent reduction of N-acetyl-5-glutamyl phosphate to yield N-acetyl-L-glutamate 5-semialdehyde. This Thermus thermophilus (strain ATCC BAA-163 / DSM 7039 / HB27) protein is N-acetyl-gamma-glutamyl-phosphate reductase.